We begin with the raw amino-acid sequence, 399 residues long: Enolase (399 aa).

Glutamine 149 contributes to the (2R)-2-phosphoglycerate binding site. The active-site Proton donor is the glutamate 191. Residues aspartate 227, glutamate 268, and aspartate 293 each coordinate Mg(2+). (2R)-2-phosphoglycerate-binding residues include lysine 318, arginine 347, serine 348, and lysine 369. The active-site Proton acceptor is the lysine 318.

Belongs to the enolase family. Mg(2+) is required as a cofactor.

It localises to the cytoplasm. It is found in the secreted. The protein resides in the cell surface. The catalysed reaction is (2R)-2-phosphoglycerate = phosphoenolpyruvate + H2O. Its pathway is carbohydrate degradation; glycolysis; pyruvate from D-glyceraldehyde 3-phosphate: step 4/5. Catalyzes the reversible conversion of 2-phosphoglycerate (2-PG) into phosphoenolpyruvate (PEP). It is essential for the degradation of carbohydrates via glycolysis. The chain is Enolase from Archaeoglobus fulgidus (strain ATCC 49558 / DSM 4304 / JCM 9628 / NBRC 100126 / VC-16).